Consider the following 259-residue polypeptide: Phosphate import ATP-binding protein PstB (259 aa).

The ABC transporter domain maps to 13–254 (IAVKNLNFFY…PTRKETEDYI (242 aa)). ATP is bound at residue 45–52 (GPSGCGKS).

It belongs to the ABC transporter superfamily. Phosphate importer (TC 3.A.1.7) family. In terms of assembly, the complex is composed of two ATP-binding proteins (PstB), two transmembrane proteins (PstC and PstA) and a solute-binding protein (PstS).

The protein resides in the cell inner membrane. It catalyses the reaction phosphate(out) + ATP + H2O = ADP + 2 phosphate(in) + H(+). In terms of biological role, part of the ABC transporter complex PstSACB involved in phosphate import. Responsible for energy coupling to the transport system. This Albidiferax ferrireducens (strain ATCC BAA-621 / DSM 15236 / T118) (Rhodoferax ferrireducens) protein is Phosphate import ATP-binding protein PstB.